We begin with the raw amino-acid sequence, 977 residues long: Ephrin type-A receptor 2 (977 aa).

The first 25 residues, 1–25, serve as a signal peptide directing secretion; that stretch reads MELRAVGFCLALLWGCALAAAAAQG. Residues 1 to 205 form a mediates interaction with CLDN4 region; sequence MELRAVGFCL…YYKKCPEMLQ (205 aa). Over 26–538 the chain is Extracellular; it reads KEVVLLDFAA…STEGSANMAV (513 aa). In terms of domain architecture, Eph LBD spans 27-205; the sequence is EVVLLDFAAM…YYKKCPEMLQ (179 aa). 2 cysteine pairs are disulfide-bonded: C69–C187 and C104–C114. The region spanning 329–433 is the Fibronectin type-III 1 domain; the sequence is PPSAPNYLTA…TSRSFRTASV (105 aa). N-linked (GlcNAc...) asparagine glycosylation is found at N408 and N436. A Fibronectin type-III 2 domain is found at 439–530; that stretch reads EPPKVRLEDR…KVHEFQTLST (92 aa). A helical transmembrane segment spans residues 539–559; that stretch reads IGGVAVGVVLLLVLAGVGLFI. Over 560–977 the chain is Cytoplasmic; that stretch reads HRRRRNLRAR…DQVNTVGIPI (418 aa). A phosphoserine mark is found at S571 and S580. A phosphotyrosine; by autocatalysis mark is found at Y589 and Y595. Residues 607-907 are mediates interaction with ARHGEF16; the sequence is TEIHPSCVAR…STSGSEGVPF (301 aa). A Protein kinase domain is found at 614–876; the sequence is VARQKVIGAG…DIVSILDKLI (263 aa). Residue 620–628 coordinates ATP; sequence IGAGEFGEV. Y629 is subject to Phosphotyrosine. Residue K647 coordinates ATP. At T648 the chain carries Phosphothreonine. At Y736 the chain carries Phosphotyrosine; by autocatalysis. The active-site Proton acceptor is the D740. The residue at position 773 (Y773) is a Phosphotyrosine; by autocatalysis. Phosphoserine occurs at positions 870, 893, 898, and 902. Positions 887–977 are negatively regulates interaction with ARHGEF16; the sequence is DFDPRVSIRL…DQVNTVGIPI (91 aa). An SAM domain is found at 905 to 969; sequence VPFRTVSEWL…AYSLLGLKDQ (65 aa). Position 922 is a phosphotyrosine; by autocatalysis (Y922). Y931 carries the post-translational modification Phosphotyrosine. Positions 975 to 977 match the PDZ-binding motif; the sequence is IPI.

This sequence belongs to the protein kinase superfamily. Tyr protein kinase family. Ephrin receptor subfamily. As to quaternary structure, homodimer. Interacts with INPPL1; regulates activated EPHA2 endocytosis and degradation. Interacts (inactivated form) with PTK2/FAK1 and interacts (EFNA1 ligand-activated form) with PTPN11; regulates integrin-mediated adhesion. Interacts with ARHGEF16, DOCK4 and ELMO2; mediates ligand-independent activation of RAC1 which stimulates cell migration. Interacts with CLDN4; phosphorylates CLDN4 and may regulate tight junctions. Interacts with ACP1. Interacts with CEMIP. Interacts with NCK1; may regulate EPHA2 activity in cell migration and adhesion. Interacts with SLA. Interacts (phosphorylated form) with VAV2, VAV3 and PI3-kinase p85 subunit (PIK3R1, PIK3R2 or PIK3R3); critical for the EFNA1-induced activation of RAC1 which stimulates cell migration. Interacts with ANKS1A. Interacts with TIMD4. Autophosphorylates. Phosphorylated at Ser-898 by PKB; serum-induced phosphorylation which targets EPHA2 to the cell leading edge and stimulates cell migration. Phosphorylation by PKB is inhibited by EFNA1-activated EPHA2 which regulates PKB activity via a reciprocal regulatory loop. Phosphorylated on tyrosine upon binding and activation by EFNA1. Phosphorylated residues Tyr-589 and Tyr-595 are required for binding VAV2 and VAV3 while phosphorylated residues Tyr-736 and Tyr-931 are required for binding PI3-kinase p85 subunit (PIK3R1, PIK3R2 or PIK3R3). These phosphorylated residues are critical for recruitment of VAV2 and VAV3 and PI3-kinase p85 subunit which transduce downstream signaling to activate RAC1 GTPase and cell migration. Dephosphorylation of Tyr-931 by PTPRF prevents the interaction of EPHA2 with NCK1. Phosphorylated at Ser-898 in response to TNF by RPS6KA1 and RPS6KA3; RPS6KA-EPHA2 signaling pathway controls cell migration. Phosphorylated at Ser-898 by PKA; blocks cell retraction induced by EPHA2 kinase activity. Dephosphorylated by ACP1. In terms of processing, ubiquitinated by CHIP/STUB1. Ubiquitination is regulated by the HSP90 chaperone and regulates the receptor stability and activity through proteasomal degradation. ANKS1A prevents ubiquitination and degradation. Expressed in the lung, intestine and liver. Expressed in myogenic progenitor cells.

The protein localises to the cell membrane. It is found in the cell projection. Its subcellular location is the ruffle membrane. The protein resides in the lamellipodium membrane. It localises to the cell junction. The protein localises to the focal adhesion. The catalysed reaction is L-tyrosyl-[protein] + ATP = O-phospho-L-tyrosyl-[protein] + ADP + H(+). In terms of biological role, receptor tyrosine kinase which binds promiscuously membrane-bound ephrin-A family ligands residing on adjacent cells, leading to contact-dependent bidirectional signaling into neighboring cells. The signaling pathway downstream of the receptor is referred to as forward signaling while the signaling pathway downstream of the ephrin ligand is referred to as reverse signaling. Activated by the ligand ephrin-A1/EFNA1 regulates migration, integrin-mediated adhesion, proliferation and differentiation of cells. Regulates cell adhesion and differentiation through DSG1/desmoglein-1 and inhibition of the ERK1/ERK2 signaling pathway. May also participate in UV radiation-induced apoptosis and have a ligand-independent stimulatory effect on chemotactic cell migration. During development, may function in distinctive aspects of pattern formation and subsequently in development of several fetal tissues. Involved for instance in angiogenesis, in early hindbrain development and epithelial proliferation and branching morphogenesis during mammary gland development. Engaged by the ligand ephrin-A5/EFNA5 may regulate lens fiber cells shape and interactions and be important for lens transparency development and maintenance. With ephrin-A2/EFNA2 may play a role in bone remodeling through regulation of osteoclastogenesis and osteoblastogenesis. This Mus musculus (Mouse) protein is Ephrin type-A receptor 2 (Epha2).